We begin with the raw amino-acid sequence, 293 residues long: Putative ribose uptake protein RbsU (293 aa).

10 helical membrane-spanning segments follow: residues A5–S24, I34–V51, T58–F80, T95–W114, I121–V138, R153–A170, I177–F199, I212–A234, L241–L263, and V273–I292.

The protein belongs to the GRP transporter (TC 2.A.7.5) family.

The protein resides in the cell membrane. Functionally, could be involved in the uptake of ribose. The protein is Putative ribose uptake protein RbsU (rbsU) of Staphylococcus aureus (strain COL).